Consider the following 510-residue polypeptide: Protein ERGIC-53 (510 aa).

A signal peptide spans Met-1–Gly-30. Over Asp-31–Ser-477 the chain is Lumenal. The 224-residue stretch at Arg-44 to Leu-267 folds into the L-type lectin-like domain. Residues Ser-88 and Asp-121 each coordinate a carbohydrate. Asp-152, Phe-154, and Asn-156 together coordinate Ca(2+). Residues Asn-156 and His-178 each contribute to the a carbohydrate site. A Ca(2+)-binding site is contributed by Asp-181. Cys-190 and Cys-230 form a disulfide bridge. An a carbohydrate-binding site is contributed by Gly-251–Leu-253. A Phosphoserine modification is found at Ser-425. A helical membrane pass occupies residues Thr-478–Tyr-498. Topologically, residues Arg-499–Phe-510 are cytoplasmic. Positions Arg-499–Phe-510 are mediates interaction with RAB3GAP1, RAB3GAP2 and UBXN6. An ER export motif motif is present at residues Phe-509 to Phe-510.

In terms of assembly, exists both as a covalent disulfide-linked homohexamer, and a complex of three disulfide-linked dimers non-covalently kept together. Interacts with MCFD2. May interact with TMEM115. Interacts with RAB3GAP1 and RAB3GAP2. Interacts with UBXN6. Interacts with SERPINA1/alpha1-antitrypsin. Interacts with BET1. Post-translationally, the N-terminal may be partly blocked. Ubiquitous.

It is found in the endoplasmic reticulum-Golgi intermediate compartment membrane. The protein localises to the golgi apparatus membrane. The protein resides in the endoplasmic reticulum membrane. In terms of biological role, mannose-specific lectin. May recognize sugar residues of glycoproteins, glycolipids, or glycosylphosphatidyl inositol anchors and may be involved in the sorting or recycling of proteins, lipids, or both. The LMAN1-MCFD2 complex forms a specific cargo receptor for the ER-to-Golgi transport of selected proteins. The protein is Protein ERGIC-53 (LMAN1) of Homo sapiens (Human).